Consider the following 586-residue polypeptide: Monoterpene synthase TPS4, chloroplastic (586 aa).

A chloroplast-targeting transit peptide spans 1–47; the sequence is MAATRNLSLLAQSSQPWAGIYGSHGSPRPISSWLRRQSIAKTSYICM. Residues D340, D344, D485, T489, and E493 each coordinate Mg(2+). Positions 340–344 match the DDXXD motif motif; that stretch reads DDIFD.

This sequence belongs to the terpene synthase family. Tpsg subfamily. Monomer. Requires Mg(2+) as cofactor.

The protein localises to the plastid. It is found in the chloroplast. The catalysed reaction is (2E)-geranyl diphosphate + H2O = (2E)-geraniol + diphosphate. Its pathway is secondary metabolite biosynthesis; terpenoid biosynthesis. Functionally, monoterpene synthase involved in the biosynthesis of volatile organic compounds. Mediates the conversion of (2E)-geranyl diphosphate (GPP) into the acyclic monoterpene, geraniol. Does not use (2E,6E)-farnesyl diphosphate (FPP) as substrate. This is Monoterpene synthase TPS4, chloroplastic from Cananga odorata (Ylang-ylang tree).